The primary structure comprises 201 residues: Cell division protein SepF (201 aa).

Residues 27 to 38 show a composition bias toward basic and acidic residues; the sequence is VQERTSVQRDSR. Positions 27–99 are disordered; sequence VQERTSVQRD…PRVQNKDSVR (73 aa). Over residues 43–54 the composition is skewed to polar residues; that stretch reads QEASQRSHMTNS. Residues 72-81 show a composition bias toward basic and acidic residues; the sequence is NRQERQRVQR. The span at 83–92 shows a compositional bias: polar residues; it reads NAYQQATPRV.

Belongs to the SepF family. In terms of assembly, homodimer. Interacts with FtsZ.

It is found in the cytoplasm. In terms of biological role, cell division protein that is part of the divisome complex and is recruited early to the Z-ring. Probably stimulates Z-ring formation, perhaps through the cross-linking of FtsZ protofilaments. Its function overlaps with FtsA. The protein is Cell division protein SepF of Streptococcus agalactiae serotype Ia (strain ATCC 27591 / A909 / CDC SS700).